The primary structure comprises 176 residues: NAD(P)H-quinone oxidoreductase subunit 6, chloroplastic (176 aa).

A run of 5 helical transmembrane segments spans residues 10–30 (ILLV…VLLT), 32–52 (PIYS…FHIP), 61–81 (AQLL…VMFM), 107–127 (ILFS…IWTT), and 152–172 (FYLP…GAIA).

Belongs to the complex I subunit 6 family. In terms of assembly, NDH is composed of at least 16 different subunits, 5 of which are encoded in the nucleus.

Its subcellular location is the plastid. The protein localises to the chloroplast thylakoid membrane. The enzyme catalyses a plastoquinone + NADH + (n+1) H(+)(in) = a plastoquinol + NAD(+) + n H(+)(out). It catalyses the reaction a plastoquinone + NADPH + (n+1) H(+)(in) = a plastoquinol + NADP(+) + n H(+)(out). NDH shuttles electrons from NAD(P)H:plastoquinone, via FMN and iron-sulfur (Fe-S) centers, to quinones in the photosynthetic chain and possibly in a chloroplast respiratory chain. The immediate electron acceptor for the enzyme in this species is believed to be plastoquinone. Couples the redox reaction to proton translocation, and thus conserves the redox energy in a proton gradient. This chain is NAD(P)H-quinone oxidoreductase subunit 6, chloroplastic (ndhG), found in Calycanthus floridus var. glaucus (Eastern sweetshrub).